A 147-amino-acid polypeptide reads, in one-letter code: UPF0179 protein MTH_609 (147 aa).

The protein belongs to the UPF0179 family.

The sequence is that of UPF0179 protein MTH_609 from Methanothermobacter thermautotrophicus (strain ATCC 29096 / DSM 1053 / JCM 10044 / NBRC 100330 / Delta H) (Methanobacterium thermoautotrophicum).